The primary structure comprises 396 residues: Phosphoglycerate kinase (396 aa).

Substrate contacts are provided by residues 20 to 22 (DIN), Arg-35, 58 to 61 (HQGR), Arg-115, and Arg-155. Residues Glu-328 and 353-356 (GGDT) contribute to the ATP site.

Belongs to the phosphoglycerate kinase family. Monomer.

The protein resides in the cytoplasm. The enzyme catalyses (2R)-3-phosphoglycerate + ATP = (2R)-3-phospho-glyceroyl phosphate + ADP. It participates in carbohydrate degradation; glycolysis; pyruvate from D-glyceraldehyde 3-phosphate: step 2/5. The protein is Phosphoglycerate kinase of Natronomonas pharaonis (strain ATCC 35678 / DSM 2160 / CIP 103997 / JCM 8858 / NBRC 14720 / NCIMB 2260 / Gabara) (Halobacterium pharaonis).